The chain runs to 252 residues: Type III pantothenate kinase (252 aa).

6-13 is an ATP binding site; it reads DIGNTNIV. 107-110 is a binding site for substrate; it reads GADL. The Proton acceptor role is filled by D109. D129 is a K(+) binding site. T132 serves as a coordination point for ATP. A substrate-binding site is contributed by T184.

The protein belongs to the type III pantothenate kinase family. In terms of assembly, homodimer. The cofactor is NH4(+). It depends on K(+) as a cofactor.

The protein resides in the cytoplasm. It catalyses the reaction (R)-pantothenate + ATP = (R)-4'-phosphopantothenate + ADP + H(+). Its pathway is cofactor biosynthesis; coenzyme A biosynthesis; CoA from (R)-pantothenate: step 1/5. Catalyzes the phosphorylation of pantothenate (Pan), the first step in CoA biosynthesis. This chain is Type III pantothenate kinase, found in Bifidobacterium animalis subsp. lactis (strain AD011).